Here is a 154-residue protein sequence, read N- to C-terminus: 6,7-dimethyl-8-ribityllumazine synthase (154 aa).

5-amino-6-(D-ribitylamino)uracil contacts are provided by residues Phe22, 56–58, and 80–82; these read SFE and AVI. (2S)-2-hydroxy-3-oxobutyl phosphate is bound at residue 85–86; sequence ST. His88 functions as the Proton donor in the catalytic mechanism. 5-amino-6-(D-ribitylamino)uracil is bound at residue Tyr113. Arg127 lines the (2S)-2-hydroxy-3-oxobutyl phosphate pocket.

This sequence belongs to the DMRL synthase family. As to quaternary structure, forms an icosahedral capsid composed of 60 subunits, arranged as a dodecamer of pentamers.

The catalysed reaction is (2S)-2-hydroxy-3-oxobutyl phosphate + 5-amino-6-(D-ribitylamino)uracil = 6,7-dimethyl-8-(1-D-ribityl)lumazine + phosphate + 2 H2O + H(+). It participates in cofactor biosynthesis; riboflavin biosynthesis; riboflavin from 2-hydroxy-3-oxobutyl phosphate and 5-amino-6-(D-ribitylamino)uracil: step 1/2. Functionally, catalyzes the formation of 6,7-dimethyl-8-ribityllumazine by condensation of 5-amino-6-(D-ribitylamino)uracil with 3,4-dihydroxy-2-butanone 4-phosphate. This is the penultimate step in the biosynthesis of riboflavin. The polypeptide is 6,7-dimethyl-8-ribityllumazine synthase (Persephonella marina (strain DSM 14350 / EX-H1)).